A 104-amino-acid chain; its full sequence is Signal recognition particle 19 kDa protein (104 aa).

The protein belongs to the SRP19 family. Part of the signal recognition particle protein translocation system, which is composed of SRP and FtsY. Archaeal SRP consists of a 7S RNA molecule of 300 nucleotides and two protein subunits: SRP54 and SRP19.

The protein resides in the cytoplasm. Involved in targeting and insertion of nascent membrane proteins into the cytoplasmic membrane. Binds directly to 7S RNA and mediates binding of the 54 kDa subunit of the SRP. This chain is Signal recognition particle 19 kDa protein, found in Archaeoglobus fulgidus (strain ATCC 49558 / DSM 4304 / JCM 9628 / NBRC 100126 / VC-16).